Consider the following 282-residue polypeptide: Ribosome biogenesis GTPase A (282 aa).

One can recognise a CP-type G domain in the interval 14–178; the sequence is RREVTEKLKL…LLDTPGILWP (165 aa). GTP is bound by residues 58 to 61, 86 to 87, 130 to 135, and Gly174; these read NKAD, NS, and NVGKST.

It belongs to the TRAFAC class YlqF/YawG GTPase family. MTG1 subfamily. As to quaternary structure, interacts with ctc. Interacts with the immature 50S ribosome subunit. 2 molecules of rbgA bind to one 50S subunit.

The protein resides in the cytoplasm. Essential protein that is required for a late step of 50S ribosomal subunit assembly. Has GTPase activity that is stimulated by interaction with the immature 50S ribosome subunit. Binds to the 23S rRNA. Required for the association of ribosomal proteins rplP and rpmA with the large subunit. This is Ribosome biogenesis GTPase A (rbgA) from Bacillus spizizenii (strain ATCC 23059 / NRRL B-14472 / W23) (Bacillus subtilis subsp. spizizenii).